Reading from the N-terminus, the 355-residue chain is Phytoene synthase (355 aa).

This sequence belongs to the phytoene/squalene synthase family. Requires ATP as cofactor. It depends on Mn(2+) as a cofactor. Mg(2+) serves as cofactor.

It functions in the pathway carotenoid biosynthesis; phytoene biosynthesis. Involved in the biosynthesis of carotenoids. Catalyzes the condensation of two molecules of geranylgeranyl diphosphate (GGPP) to give prephytoene diphosphate (PPPP) and the subsequent rearrangement of the cyclopropylcarbinyl intermediate to yield phytoene. The polypeptide is Phytoene synthase (crtB) (Cereibacter sphaeroides (strain ATCC 17023 / DSM 158 / JCM 6121 / CCUG 31486 / LMG 2827 / NBRC 12203 / NCIMB 8253 / ATH 2.4.1.) (Rhodobacter sphaeroides)).